Consider the following 48-residue polypeptide: Omega-agatoxin-Aa5a (48 aa).

Intrachain disulfides connect cysteine 3/cysteine 16, cysteine 10/cysteine 21, cysteine 15/cysteine 32, and cysteine 23/cysteine 30.

The protein belongs to the neurotoxin 02 (plectoxin) family. Expressed by the venom gland.

It is found in the secreted. Its function is as follows. The toxin blocks voltage-gated calcium channels in rat cerebellar granule cells (IC(50)=200 nM). In Agelenopsis aperta (North American funnel-web spider), this protein is Omega-agatoxin-Aa5a.